The sequence spans 109 residues: UPF0102 protein Suden_1901 (109 aa).

Belongs to the UPF0102 family.

The protein is UPF0102 protein Suden_1901 of Sulfurimonas denitrificans (strain ATCC 33889 / DSM 1251) (Thiomicrospira denitrificans (strain ATCC 33889 / DSM 1251)).